The following is a 605-amino-acid chain: Sulfite reductase [NADPH] flavoprotein alpha-component (605 aa).

The region spanning 70 to 208 (LTIIYASQTG…PAAEWRVKAL (139 aa)) is the Flavodoxin-like domain. FMN-binding positions include 76–81 (SQTGNA), 123–126 (STHG), and 159–168 (LGDSSYEFFC). In terms of domain architecture, FAD-binding FR-type spans 240-454 (QNPYEATLLT…VEENNNFKLP (215 aa)). FAD is bound by residues T328, G362, 392 to 395 (RLYS), 410 to 412 (TVG), and 425 to 428 (GGAS). Residues 525–526 (SR), 531–535 (KVYVQ), and D567 each bind NADP(+). Y605 lines the FAD pocket.

Belongs to the NADPH-dependent sulphite reductase flavoprotein subunit CysJ family. This sequence in the N-terminal section; belongs to the flavodoxin family. The protein in the C-terminal section; belongs to the flavoprotein pyridine nucleotide cytochrome reductase family. In terms of assembly, alpha(8)-beta(8). The alpha component is a flavoprotein, the beta component is a hemoprotein. It depends on FAD as a cofactor. FMN is required as a cofactor.

The enzyme catalyses hydrogen sulfide + 3 NADP(+) + 3 H2O = sulfite + 3 NADPH + 4 H(+). The protein operates within sulfur metabolism; hydrogen sulfide biosynthesis; hydrogen sulfide from sulfite (NADPH route): step 1/1. Component of the sulfite reductase complex that catalyzes the 6-electron reduction of sulfite to sulfide. This is one of several activities required for the biosynthesis of L-cysteine from sulfate. The flavoprotein component catalyzes the electron flow from NADPH -&gt; FAD -&gt; FMN to the hemoprotein component. The sequence is that of Sulfite reductase [NADPH] flavoprotein alpha-component from Photobacterium profundum (strain SS9).